A 496-amino-acid polypeptide reads, in one-letter code: Probable cytosol aminopeptidase (496 aa).

Mn(2+)-binding residues include K258 and D263. The active site involves K270. Residues D281, D340, and E342 each coordinate Mn(2+). R344 is a catalytic residue.

Belongs to the peptidase M17 family. It depends on Mn(2+) as a cofactor.

It localises to the cytoplasm. It carries out the reaction Release of an N-terminal amino acid, Xaa-|-Yaa-, in which Xaa is preferably Leu, but may be other amino acids including Pro although not Arg or Lys, and Yaa may be Pro. Amino acid amides and methyl esters are also readily hydrolyzed, but rates on arylamides are exceedingly low.. It catalyses the reaction Release of an N-terminal amino acid, preferentially leucine, but not glutamic or aspartic acids.. In terms of biological role, presumably involved in the processing and regular turnover of intracellular proteins. Catalyzes the removal of unsubstituted N-terminal amino acids from various peptides. This is Probable cytosol aminopeptidase from Helicobacter pylori (strain HPAG1).